A 777-amino-acid chain; its full sequence is MTNNITPIHEYKKYWAECFGTAPFLPTSRKEMDALGWDSCDIIIVTGDAYVDHPSFGMAIIGRLLEAQGFRVGIIAQPEWQNKNAFMQLGKPNLFFGITAGNMDSMINRYTADKKLRHDDAYTPNNEGGKRPDRATLVYSQRCREAYKEVPIVLGGIEASLRRVAHYDYWSDKVRRSVLFDAKADILLFGNAERALVEVAHRIANGEDISTMTNIRGTAVNLPAAPEGYTVIDSSRIEKPRKEAFVPKNPYEVETQCETKKDEPVAQPITIRPSRHDAATTAVRLPSFEKLRNDRILYAHASRVLHLETNPYSGRALLQSHGDRELWVNQAPIPLTTEEMDFVFGLPYARVPHPMYGKAKIPAYDMIKTSVNIMRGCFGGCSFCSITEHEGRIIQNRSKESIINEIEEIRDKVPGFTGTISDLGGPTANMYRLGCKDPKAEANCRRPSCVFPGICNKLNTDHKHTIDLYREARKVEGVKKVMVASGVRYDLAIESPEYVKELVTHHVGGYLKIAPEHTEKGPLDLMMKPGMGTYDRFKEMFEKYSAEAGKKQYLIPYFISAHPGTEDEDMLNLALWLKKNNFECDQVQNFYPSPMCNATSMYYSETNPLKRVKYKQREDIPVAKGERQRRLHKALLRYHDPANWPLIREALINMGKKHLIGDKPTCLVPAEDIDAQTPAQRRKSGRHGANRFATKHTKNQPGFGGHLNKRAEGGSKDGKPSGNRNGSGKVQGGQRPASNGQRPSGNGANRPAGSKPQGQGRPQGQGKPAGQRKPKRR.

The Radical SAM core domain maps to 363–642; that stretch reads AYDMIKTSVN…KALLRYHDPA (280 aa). [4Fe-4S] cluster is bound by residues Cys377, Cys381, and Cys384. A disordered region spans residues 675 to 777; that stretch reads AQTPAQRRKS…PAGQRKPKRR (103 aa). Residues 680 to 698 show a composition bias toward basic residues; sequence QRRKSGRHGANRFATKHTK. Basic and acidic residues predominate over residues 709-719; it reads KRAEGGSKDGK. The segment covering 736–747 has biased composition (polar residues); sequence PASNGQRPSGNG. Over residues 755–769 the composition is skewed to low complexity; the sequence is KPQGQGRPQGQGKPA.

This sequence belongs to the UPF0313 family. [4Fe-4S] cluster is required as a cofactor.

The protein is UPF0313 protein VP1980 of Vibrio parahaemolyticus serotype O3:K6 (strain RIMD 2210633).